Consider the following 293-residue polypeptide: N(1)-aminopropylagmatine ureohydrolase (293 aa).

The Mn(2+) site is built by His-105, Asp-128, His-130, Asp-132, Asp-210, and Asp-212.

Belongs to the arginase family. Mn(2+) is required as a cofactor.

The catalysed reaction is N(1)-(3-aminopropyl)agmatine + H2O = urea + spermidine. The protein operates within amine and polyamine biosynthesis; spermidine biosynthesis. In terms of biological role, involved in the biosynthesis of polyamines which are thought to support the growth of thermophilic microorganisms under high-temperature conditions. It seems that long-chain and branched-chain of polyamines effectively stabilize DNA and RNA, respectively. Catalyzes the decarboxylation of N1-(3-aminopropyl)agmatine to yield spermidine and urea. Does not act on agmatine. This chain is N(1)-aminopropylagmatine ureohydrolase, found in Thermus thermophilus (strain ATCC BAA-163 / DSM 7039 / HB27).